Reading from the N-terminus, the 33-residue chain is Photosystem II reaction center protein Psb30 (33 aa).

Residues 5-25 (ILAQLTALAFIVVSGPLVIAL) traverse the membrane as a helical segment.

It belongs to the Psb30/Ycf12 family. In terms of assembly, PSII is composed of 1 copy each of membrane proteins PsbA, PsbB, PsbC, PsbD, PsbE, PsbF, PsbH, PsbI, PsbJ, PsbK, PsbL, PsbM, PsbT, PsbX, PsbY, PsbZ, Psb30/Ycf12, peripheral proteins of the oxygen-evolving complex and a large number of cofactors. It forms dimeric complexes.

Its subcellular location is the plastid. The protein localises to the chloroplast thylakoid membrane. In terms of biological role, a core subunit of photosystem II (PSII), probably helps stabilize the reaction center. The chain is Photosystem II reaction center protein Psb30 from Chaetosphaeridium globosum (Charophycean green alga).